Here is a 681-residue protein sequence, read N- to C-terminus: Protein hook (681 aa).

The region spanning 6–123 is the Calponin-homology (CH) domain; sequence NEMYYSLLEW…RLLQLVLGCA (118 aa). 2 coiled-coil regions span residues 135-439 and 482-584; these read EIMS…LKCG and QTAL…KYRK.

The protein belongs to the hook family. As to quaternary structure, homodimer. Interacts with microtubules via its N-terminus.

The protein resides in the cytoplasm. Its subcellular location is the cytoskeleton. It localises to the endosome. The protein localises to the synapse. Functionally, involved in endocytic trafficking by stabilizing organelles of the endocytic pathway. Probably acts as a cytoskeletal linker protein required to tether endosome vesicles to the cytoskeleton. Involved in modulation of endocytosis at stages required for down-regulation of membrane proteins that control synapse size. Not involved in synaptic vesicle recycling. Required in R7 cells for boss endocytosis into multivesicular bodies (MVBs). Has a role in regulating adult longevity. In Drosophila ananassae (Fruit fly), this protein is Protein hook.